A 270-amino-acid chain; its full sequence is Putative [LysW]-aminoadipate/[LysW]-glutamate kinase (270 aa).

Substrate-binding positions include glycine 42–glycine 43, arginine 69, and asparagine 177.

This sequence belongs to the acetylglutamate kinase family. LysZ subfamily.

The protein localises to the cytoplasm. It catalyses the reaction [amino-group carrier protein]-C-terminal-N-(1,4-dicarboxybutan-1-yl)-L-glutamine + ATP = [amino-group carrier protein]-C-terminal-N-(1-carboxy-5-phosphooxy-5-oxopentan-1-yl)-L-glutamine + ADP. It carries out the reaction [amino-group carrier protein]-C-terminal-gamma-(L-glutamyl)-L-glutamate + ATP = [amino-group carrier protein]-C-terminal-gamma-(5-phospho-L-glutamyl)-L-glutamate + ADP. It functions in the pathway amino-acid biosynthesis; L-lysine biosynthesis via AAA pathway; L-lysine from L-alpha-aminoadipate (Thermus route): step 2/5. It participates in amino-acid biosynthesis; L-arginine biosynthesis. In terms of biological role, involved in both the arginine and lysine biosynthetic pathways. Phosphorylates the LysW-bound precursors glutamate (for arginine biosynthesis), respectively alpha-aminoadipate (for lysine biosynthesis). This chain is Putative [LysW]-aminoadipate/[LysW]-glutamate kinase, found in Aeropyrum pernix (strain ATCC 700893 / DSM 11879 / JCM 9820 / NBRC 100138 / K1).